The sequence spans 114 residues: T cell receptor alpha variable 3 (114 aa).

An N-terminal signal peptide occupies residues 1–20; it reads MASAPISMLAMLFTLSGLRA. In terms of domain architecture, Ig-like spans 21 to 114; sequence QSVAQPEDQV…SALYFCAVRD (94 aa). A disulfide bond links cysteine 42 and cysteine 110. The N-linked (GlcNAc...) asparagine glycan is linked to asparagine 87.

In terms of assembly, alpha-beta TR is a heterodimer composed of an alpha and beta chain; disulfide-linked. The alpha-beta TR is associated with the transmembrane signaling CD3 coreceptor proteins to form the TR-CD3 (TcR or TCR). The assembly of alpha-beta TR heterodimers with CD3 occurs in the endoplasmic reticulum where a single alpha-beta TR heterodimer associates with one CD3D-CD3E heterodimer, one CD3G-CD3E heterodimer and one CD247 homodimer forming a stable octameric structure. CD3D-CD3E and CD3G-CD3E heterodimers preferentially associate with TR alpha and TR beta chains, respectively. The association of the CD247 homodimer is the last step of TcR assembly in the endoplasmic reticulum and is required for transport to the cell surface.

Its subcellular location is the cell membrane. In terms of biological role, v region of the variable domain of T cell receptor (TR) alpha chain that participates in the antigen recognition. Alpha-beta T cell receptors are antigen specific receptors which are essential to the immune response and are present on the cell surface of T lymphocytes. Recognize peptide-major histocompatibility (MH) (pMH) complexes that are displayed by antigen presenting cells (APC), a prerequisite for efficient T cell adaptive immunity against pathogens. Binding of alpha-beta TR to pMH complex initiates TR-CD3 clustering on the cell surface and intracellular activation of LCK that phosphorylates the ITAM motifs of CD3G, CD3D, CD3E and CD247 enabling the recruitment of ZAP70. In turn ZAP70 phosphorylates LAT, which recruits numerous signaling molecules to form the LAT signalosome. The LAT signalosome propagates signal branching to three major signaling pathways, the calcium, the mitogen-activated protein kinase (MAPK) kinase and the nuclear factor NF-kappa-B (NF-kB) pathways, leading to the mobilization of transcription factors that are critical for gene expression and essential for T cell growth and differentiation. The T cell repertoire is generated in the thymus, by V-(D)-J rearrangement. This repertoire is then shaped by intrathymic selection events to generate a peripheral T cell pool of self-MH restricted, non-autoaggressive T cells. Post-thymic interaction of alpha-beta TR with the pMH complexes shapes TR structural and functional avidity. This chain is T cell receptor alpha variable 3, found in Homo sapiens (Human).